The following is a 257-amino-acid chain: Protein IMPACT homolog (257 aa).

Residues 9–102 enclose the RWD domain; the sequence is AEIESLASIF…SLVQDFIRDL (94 aa).

Belongs to the IMPACT family. Interacts with gcn-1; prevents the interaction of gcn-1 with gcn-2 and inhibits gcn-2 kinase activity. Interaction with rpl-39; this interaction occurs in a gcn-1-independent manner. Associates with ribosomes; this interaction occurs in a gcn-1-independent manner. Associates with actin; this interaction occurs in a gcn-1-independent manner.

The protein resides in the cytoplasm. Translational regulator that ensures constant high levels of translation under amino acid starvation. Plays a role as a negative regulator of the gcn-2 kinase activity; impairs gcn-1-mediated gcn-2 activation, and hence gcn-2-mediated eIF-2-alpha phosphorylation and subsequent down-regulation of protein synthesis in amino acid-starved cells. Plays a role in differentiation of neuronal cells by stimulating neurite outgrowth. The chain is Protein IMPACT homolog from Caenorhabditis elegans.